Here is a 240-residue protein sequence, read N- to C-terminus: Endonuclease NBR9 (240 aa).

The interval 1–24 is disordered; the sequence is MKGTGGVVVGTQNPVRDYNHSTDE. The region spanning 97 to 173 is the Smr domain; that stretch reads IDLHGLYVKE…NSGVLVLELQ (77 aa). A disordered region spans residues 181-219; sequence GPAVNAPTNQYNAQPHPQYNNNGGQPQGQAQNYNNSGND. Over residues 194-215 the composition is skewed to low complexity; the sequence is QPHPQYNNNGGQPQGQAQNYNN.

It localises to the cytoplasm. Its function is as follows. Endonuclease involved in nonstop mRNA decay via the formation of mRNA cleavage fragments in the vicinity of stalled ribosomes. The protein is Endonuclease NBR9 of Saccharomyces cerevisiae (strain ATCC 204508 / S288c) (Baker's yeast).